Here is a 304-residue protein sequence, read N- to C-terminus: tRNA dimethylallyltransferase (304 aa).

9 to 16 (APTAAGKS) contacts ATP. Position 11 to 16 (11 to 16 (TAAGKS)) interacts with substrate.

Belongs to the IPP transferase family. In terms of assembly, monomer. Requires Mg(2+) as cofactor.

The enzyme catalyses adenosine(37) in tRNA + dimethylallyl diphosphate = N(6)-dimethylallyladenosine(37) in tRNA + diphosphate. Its function is as follows. Catalyzes the transfer of a dimethylallyl group onto the adenine at position 37 in tRNAs that read codons beginning with uridine, leading to the formation of N6-(dimethylallyl)adenosine (i(6)A). The polypeptide is tRNA dimethylallyltransferase (Deinococcus geothermalis (strain DSM 11300 / CIP 105573 / AG-3a)).